The primary structure comprises 257 residues: Lysine-rich coiled-coil protein 1 (257 aa).

The tract at residues 145-257 (NTSAHQASYK…MLWDQSILGF (113 aa)) is disordered. The span at 152-162 (SYKHIHQKRKR) shows a compositional bias: basic residues. Composition is skewed to basic and acidic residues over residues 163-176 (HTEEGREKPEEERP), 183-193 (ACEEIDLDKYK), 200-212 (TEAETVRVSTEKL), and 219-228 (RSRDVASKKE). Positions 210 to 248 (EKLKNRKEKRSRDVASKKEERKRRKEKKEQGQERTEEEM) form a coiled coil.

This chain is Lysine-rich coiled-coil protein 1 (KRCC1), found in Bos taurus (Bovine).